Consider the following 493-residue polypeptide: Lysostaphin (493 aa).

Residues 1 to 23 form the signal peptide; it reads MKKTKNNYYTRPLAIGLSTFALA. A propeptide spanning residues 24-247 is cleaved from the precursor; that stretch reads SIVYGGIQNE…ALVQNRTALR (224 aa). 14 tandem repeats follow at residues 49-61, 62-74, 75-87, 88-100, 101-113, 114-126, 127-139, 140-152, 153-165, 166-178, 179-191, 192-204, 205-217, and 218-230. A 15 X 13 AA approximate tandem repeats of A-E-V-E-T-S-K-A-P-V-E-N-T region spans residues 49–243; that stretch reads AEVETSKAPV…ETSKALVQNR (195 aa). The tract at residues 52-232 is disordered; the sequence is ETSKAPVENT…SKAPVENTAE (181 aa). Residues 231-243 form a 15; approximate repeat; it reads AEVETSKALVQNR. Zn(2+) is bound by residues His-279 and Asp-283. His-360 is a catalytic residue. Residue His-362 coordinates Zn(2+). The SH3b domain maps to 413–481; it reads SESASFTPNT…YLPVRTWNKS (69 aa).

The protein belongs to the peptidase M23B family. Monomer. Requires Zn(2+) as cofactor.

It is found in the secreted. The enzyme catalyses Hydrolysis of the -Gly-|-Gly- bond in the pentaglycine inter-peptide link joining staphylococcal cell wall peptidoglycans.. Its function is as follows. Lyses staphylococcal cells by hydrolyzing the polyglycine interpeptide bridges of the peptidoglycan. The polypeptide is Lysostaphin (lss) (Staphylococcus simulans).